The primary structure comprises 251 residues: uncharacterized protein (251 aa).

A signal peptide spans 1 to 19 (MRYLKRITIYISLLILVSG). Cys20 carries N-palmitoyl cysteine lipidation. Residue Cys20 is the site of S-diacylglycerol cysteine attachment.

This sequence belongs to the staphylococcal tandem lipoprotein family.

The protein resides in the cell membrane. This is an uncharacterized protein from Staphylococcus epidermidis (strain ATCC 12228 / FDA PCI 1200).